Consider the following 188-residue polypeptide: Elongation factor P (188 aa).

At lysine 34 the chain carries N6-(3,6-diaminohexanoyl)-5-hydroxylysine.

Belongs to the elongation factor P family. Post-translationally, may be beta-lysylated on the epsilon-amino group of Lys-34 by the combined action of EpmA and EpmB, and then hydroxylated on the C5 position of the same residue by EpmC (if this protein is present). Lysylation is critical for the stimulatory effect of EF-P on peptide-bond formation. The lysylation moiety may extend toward the peptidyltransferase center and stabilize the terminal 3-CCA end of the tRNA. Hydroxylation of the C5 position on Lys-34 may allow additional potential stabilizing hydrogen-bond interactions with the P-tRNA.

It is found in the cytoplasm. It participates in protein biosynthesis; polypeptide chain elongation. In terms of biological role, involved in peptide bond synthesis. Alleviates ribosome stalling that occurs when 3 or more consecutive Pro residues or the sequence PPG is present in a protein, possibly by augmenting the peptidyl transferase activity of the ribosome. Modification of Lys-34 is required for alleviation. The protein is Elongation factor P of Proteus mirabilis (strain HI4320).